The chain runs to 383 residues: Acetylornithine deacetylase (383 aa).

Zn(2+) is bound at residue H80. D82 is a catalytic residue. Position 112 (D112) interacts with Zn(2+). E144 is a catalytic residue. Zn(2+) is bound by residues E145, E169, and H355.

The protein belongs to the peptidase M20A family. ArgE subfamily. Homodimer. Zn(2+) is required as a cofactor. The cofactor is Co(2+). It depends on glutathione as a cofactor.

The protein localises to the cytoplasm. It carries out the reaction N(2)-acetyl-L-ornithine + H2O = L-ornithine + acetate. It functions in the pathway amino-acid biosynthesis; L-arginine biosynthesis; L-ornithine from N(2)-acetyl-L-ornithine (linear): step 1/1. In terms of biological role, catalyzes the hydrolysis of the amide bond of N(2)-acetylated L-amino acids. Cleaves the acetyl group from N-acetyl-L-ornithine to form L-ornithine, an intermediate in L-arginine biosynthesis pathway, and a branchpoint in the synthesis of polyamines. The polypeptide is Acetylornithine deacetylase (Escherichia coli O127:H6 (strain E2348/69 / EPEC)).